Reading from the N-terminus, the 841-residue chain is Outer membrane usher protein MyfC (841 aa).

The first 26 residues, 1 to 26, serve as a signal peptide directing secretion; sequence MFFSLKNSVAKLIAFWAICLVLPVWA. The cysteines at positions 817 and 840 are disulfide-linked.

This sequence belongs to the fimbrial export usher family.

The protein resides in the cell outer membrane. Involved in the export and assembly of the MyfA fimbrial subunit. In Yersinia enterocolitica, this protein is Outer membrane usher protein MyfC (myfC).